A 129-amino-acid polypeptide reads, in one-letter code: MKYFVVALALVAAFACIAESKPAESEHELAEVEEENELADLEDAVWLEHLADLSDLEEARGFFGNTWKKIKGKADKIMLKKAVKIMVKKEGITKEEAQAKVDAMSKKQIRLYLLKYYGKKALQKASEKL.

A signal peptide spans 1 to 20 (MKYFVVALALVAAFACIAES). Positions 21–60 (KPAESEHELAEVEEENELADLEDAVWLEHLADLSDLEEAR) are excised as a propeptide. The Processing quadruplet motif motif lies at 57-60 (EEAR).

In terms of processing, cleavage of the propeptide depends on the processing quadruplet motif (XXXR, with at least one of X being E). In terms of tissue distribution, expressed by the venom gland.

The protein resides in the secreted. Functionally, insecticidal, cytolytic and antimicrobial peptide. Forms voltage-dependent, ion-permeable channels in membranes. At high concentration causes cell membrane lysis. The protein is M-zodatoxin-Lt8d (cit 1-4) of Lachesana tarabaevi (Spider).